Reading from the N-terminus, the 130-residue chain is Small ribosomal subunit protein uS9 (130 aa).

Residues arginine 106–arginine 130 are disordered. The span at valine 111 to arginine 130 shows a compositional bias: basic residues.

The protein belongs to the universal ribosomal protein uS9 family.

In Streptococcus pneumoniae serotype 2 (strain D39 / NCTC 7466), this protein is Small ribosomal subunit protein uS9.